The sequence spans 35 residues: Beta/omega-theraphotoxin-Bp1a (35 aa).

Intrachain disulfides connect cysteine 2-cysteine 16, cysteine 9-cysteine 21, and cysteine 15-cysteine 28.

This sequence belongs to the neurotoxin 10 (Hwtx-1) family. 54 (ProTx-1) subfamily. In terms of processing, an unnatural amidation at Ser-35 provokes a 14-fold increased toxin ability to inhibit Nav1.2/SCN2A and a ~2-fold decreased toxin ability to inhibit both Nav1.5/SCN5A and Nav1.7/SCN9A. Expressed by the venom gland.

It localises to the secreted. In terms of biological role, ion channel impairing toxin that inhibits voltage-gated calcium channel Cav3.1/CACNA1G (IC(50)=53 nM), voltage-gated potassium channels Kv2.1/KCNB1 (IC(50)=411 nM), all sodium channels tested (Nav1.2/SCN2A (IC(50)=60-104 nM), Nav1.5/SCN5A (IC(50)=76-358 nM), Nav1.6/SCN8A (IC(50)=21-133 nM), Nav1.7/SCN9A (IC(50)=51-95 nM), and Nav1.8/SCN10A) as well as the nociceptor cation channel TRPA1 (IC(50)=389 nM). Acts as a potent and selective blocker of voltage-gated calcium channel Cav3.1/CACNA1G, but not of Cav3.2/CACNA1H, and Cav3.3/CACNA1I. On Nav1.7/SCN9A, primarily interacts with the DII and DIV voltage-sensor domains. Also acts as an inhibitor of nociceptor cation channel TRPA1 (IC(50)~389 nM) by binding to the S1-S4 gating domain of TRPA1. It shows moderate affinity for lipid bilayers. The sequence is that of Beta/omega-theraphotoxin-Bp1a from Bumba pulcherrimaklaasi (Tarantula spider).